The primary structure comprises 1676 residues: MCDAIQIRLASPERIRSWAERVLPNGQVVGEVTKPETINYRTLKPEMDGLFCERIFGPVKDWECHCGKYKKVRYKGIVCERCGVEVTESKVRRHRMGYIDLAAVVSHVWYLKGPPSYLALFLNMSSSEVEQVIYFHSYVVLQSTTELVQPKQLLSEDELIILEERLANQPFQVGIGAQAIQYLLQQLDLDMEIRVLRNQLFHAKSSKREKLMKRLRILDNFASTGADPSWMILSVLPVIPPDLRPMVQLDGGRFATSDLNDLYRRVINRNNRLKRLQEILAPEIIIRNEKRMLQEAVDALMDNGRRGRSVVGANNRALKSLSHILEGKQGRFRQNLLGKRVDYSGRSVIVVGPELKLYQCGLPKEMALELFQPFVIQRLMAQGLANNMKAAKKIIQRKEAIVDQILHQVVKAHPVLLNRAPTLHRLGIQAFDPILVDGRAIQLHPLVCAAFNADFDGDQMAVHVPLSVEAQAEARLLMLSVNNFLSPATGDAIIMPSQDMVIGCYYLTANNPASQAKQSHYFADFEHVLMAFEQKQINLHTWVWVHVNNNLNIILERSALQEDWIQTRGESLFLKTTPGRIIFYQQAAYHVGFYNLTINKSHLKELVKTVYNLKGMACATQLADDLKQLGFHYATTCGLSLGIEDLRVAPSKQKIFQWAQQAIEKTEQLWQRAQITHVEKFHKVVDTWSEASETLKQEVVRYYEHTDPLNPVYMMAFSGARGNLSQVRQLVGMRGLMADPHGQLIDLPILSNFREGLTVTEYLISSYGARKGLVDTSLRTADSGYLTRRLVDVAQDVIIRQADCGTLRGIAVPVSKALIGRVLAQDVNEECKRNQLITADMLVALRDTKQVIVRSPLTCEALRCICQLCYGGNLAYGHMVDLAEAVGIIAAQSIGEPGTQLTMRTFHTGGVFTSAQTASVRATLDGVVTYEGRCKSTRTRYGQEAWLLETSTPLFLQNDGQQHRYDFQAGTVLLVKSGQRVKFNTLLAYLPTSTRFEKATKSVDAHNAGEVVFDQLKLEQNLVKKEGILWILSGQMLHLPAGSELLVSNEQQIKPAQVLAQSYLRSRAKGIVQIHTNQVELILDRLSFEVKEPFHFHSGDGQIIAEKFEHQTPTGGQVFHRNGQIWLVPAAIYEVSSQKDLVDIKHGQFILANQRSICGVKNELSGWVQLVKQNEVIKEIRIRPGIYLPKVKTNQLGFVQSHLLLSSYGINAYTRRFCYVENYEQGILISPVYVFAGVSPPKIVAKSRWLSLVMYQTCMFQHQQWVKSYKKVYLMRCQLQLKVAPQAPLNQVTVHKEKNRREWRLSYFSNIKLQAFQTIKWLVKNHQRVEADVPLALIQLVSAFNGIVRYHPMLNRLLVVSDQDVITYSIGKPHHFQIGDVIRIGDQISHGLVAKTSGFVIARDANQIQVRIAQGYFLSRETICYVKDGDLVNEGDHLASLVFEQVKTGDIIQGLPRIEEILEARKPKNSCELAQFDGVIQEQSLVSDDGRVQAIKGTLIVCEGTRVQAGEPLTDGAVNAHEWLQIHFNNAVPYRGMVEAARESFAKLQAKLLHQVQQVYKSQGVDIADKHIEVILRQMTSKVILDDPGDSDFLPGQLVYLNEIASYKHVIFHPVLLGITKAALNTESFISAASFQETTRILAQAAMEGQIDQLRGLKENVIMGRLIPAGTGAKYL.

Residues 1 to 582 (MCDAIQIRLA…FLKTTPGRII (582 aa)) form a DNA-directed RNA polymerase subunit beta' region. Residues C64, C66, C79, and C82 each coordinate Zn(2+). Mg(2+)-binding residues include D454, D456, and D458. The tract at residues 583-1676 (FYQQAAYHVG…IPAGTGAKYL (1094 aa)) is DNA-directed RNA polymerase subunit beta''. Residues C804, C859, C866, and C869 each contribute to the Zn(2+) site.

The protein in the N-terminal section; belongs to the RNA polymerase beta' chain family. RpoC1 subfamily. This sequence in the C-terminal section; belongs to the RNA polymerase beta' chain family. RpoC2 subfamily. As to quaternary structure, in plastids the minimal PEP RNA polymerase catalytic core is composed of four subunits: alpha, beta, beta', and beta''. When a (nuclear-encoded) sigma factor is associated with the core the holoenzyme is formed, which can initiate transcription. Beta' and beta'' are fused in this algae. Mg(2+) serves as cofactor. The cofactor is Zn(2+).

It is found in the plastid. The protein resides in the chloroplast. The catalysed reaction is RNA(n) + a ribonucleoside 5'-triphosphate = RNA(n+1) + diphosphate. In terms of biological role, DNA-dependent RNA polymerase catalyzes the transcription of DNA into RNA using the four ribonucleoside triphosphates as substrates. The chain is DNA-directed RNA polymerase subunit beta'-beta'' from Cyanidioschyzon merolae (strain NIES-3377 / 10D) (Unicellular red alga).